The primary structure comprises 603 residues: DNA-directed RNA polymerase subunit beta' N-terminal section (603 aa).

Cysteine 283, cysteine 285, cysteine 329, and cysteine 332 together coordinate Zn(2+).

It belongs to the RNA polymerase beta' chain family. RpoC1 subfamily. In plastids the minimal PEP RNA polymerase catalytic core is composed of four subunits: alpha, beta, beta', and beta''. When a (nuclear-encoded) sigma factor is associated with the core the holoenzyme is formed, which can initiate transcription. The cofactor is Zn(2+).

It localises to the plastid. The protein resides in the chloroplast. The enzyme catalyses RNA(n) + a ribonucleoside 5'-triphosphate = RNA(n+1) + diphosphate. In terms of biological role, DNA-dependent RNA polymerase catalyzes the transcription of DNA into RNA using the four ribonucleoside triphosphates as substrates. The protein is DNA-directed RNA polymerase subunit beta' N-terminal section (rpoC1A) of Chlamydomonas reinhardtii (Chlamydomonas smithii).